A 364-amino-acid chain; its full sequence is DNA replication and repair protein RecF (364 aa).

30 to 37 (GNNGMGKT) contacts ATP.

It belongs to the RecF family.

It localises to the cytoplasm. Functionally, the RecF protein is involved in DNA metabolism; it is required for DNA replication and normal SOS inducibility. RecF binds preferentially to single-stranded, linear DNA. It also seems to bind ATP. The chain is DNA replication and repair protein RecF from Porphyromonas gingivalis (strain ATCC 33277 / DSM 20709 / CIP 103683 / JCM 12257 / NCTC 11834 / 2561).